The following is a 240-amino-acid chain: ATP synthase subunit a (240 aa).

5 consecutive transmembrane segments (helical) span residues 21 to 41 (LSSM…AMLF), 83 to 103 (AVTL…FAII), 116 to 136 (DPTV…FYGV), 184 to 204 (LLGL…GAAI), and 207 to 227 (LIWQ…FVML).

The protein belongs to the ATPase A chain family. F-type ATPases have 2 components, CF(1) - the catalytic core - and CF(0) - the membrane proton channel. CF(1) has five subunits: alpha(3), beta(3), gamma(1), delta(1), epsilon(1). CF(0) has three main subunits: a(1), b(2) and c(9-12). The alpha and beta chains form an alternating ring which encloses part of the gamma chain. CF(1) is attached to CF(0) by a central stalk formed by the gamma and epsilon chains, while a peripheral stalk is formed by the delta and b chains.

Its subcellular location is the cell membrane. Functionally, key component of the proton channel; it plays a direct role in the translocation of protons across the membrane. This Macrococcus caseolyticus (strain JCSC5402) (Macrococcoides caseolyticum) protein is ATP synthase subunit a.